The following is a 634-amino-acid chain: DNA-directed RNA polymerase subunit gamma (634 aa).

Positions 74, 76, 89, and 92 each coordinate Zn(2+). Mg(2+) contacts are provided by D471, D473, and D475.

It belongs to the RNA polymerase beta' chain family. RpoC1 subfamily. As to quaternary structure, in cyanobacteria the RNAP catalytic core is composed of 2 alpha, 1 beta, 1 beta', 1 gamma and 1 omega subunit. When a sigma factor is associated with the core the holoenzyme is formed, which can initiate transcription. Mg(2+) is required as a cofactor. Requires Zn(2+) as cofactor.

It catalyses the reaction RNA(n) + a ribonucleoside 5'-triphosphate = RNA(n+1) + diphosphate. In terms of biological role, DNA-dependent RNA polymerase catalyzes the transcription of DNA into RNA using the four ribonucleoside triphosphates as substrates. The protein is DNA-directed RNA polymerase subunit gamma of Parasynechococcus marenigrum (strain WH8102).